The following is a 170-amino-acid chain: Protein BofC (170 aa).

A signal peptide spans 1–30; it reads MKRFSTAYLLLGILCSAAVFLIGAPSRALG.

In terms of assembly, monomer.

The protein localises to the forespore intermembrane space. In terms of biological role, inhibits the SpoIVB zymogen from undergoing autocatalytic activation by an unknown mechanism, and in this way plays a role in the sigma-K checkpoint of sporulation. This Bacillus subtilis (strain 168) protein is Protein BofC (bofC).